Here is a 246-residue protein sequence, read N- to C-terminus: Uridylate kinase (246 aa).

An ATP-binding site is contributed by 16-19 (KFSG). G58 lines the UMP pocket. ATP is bound by residues G59 and R63. UMP-binding positions include D78 and 139–146 (TGNPFFTT). ATP is bound by residues T166, Y172, and D175.

The protein belongs to the UMP kinase family. As to quaternary structure, homohexamer.

It is found in the cytoplasm. The catalysed reaction is UMP + ATP = UDP + ADP. The protein operates within pyrimidine metabolism; CTP biosynthesis via de novo pathway; UDP from UMP (UMPK route): step 1/1. With respect to regulation, inhibited by UTP. Catalyzes the reversible phosphorylation of UMP to UDP. The protein is Uridylate kinase of Legionella pneumophila (strain Corby).